A 217-amino-acid polypeptide reads, in one-letter code: Imidazole glycerol phosphate synthase subunit HisH (217 aa).

The 215-residue stretch at 3-217 (TIAIVDYGMG…IYRNFVHWKP (215 aa)) folds into the Glutamine amidotransferase type-1 domain. C82 (nucleophile) is an active-site residue. Active-site residues include H197 and E199.

As to quaternary structure, heterodimer of HisH and HisF.

Its subcellular location is the cytoplasm. The enzyme catalyses 5-[(5-phospho-1-deoxy-D-ribulos-1-ylimino)methylamino]-1-(5-phospho-beta-D-ribosyl)imidazole-4-carboxamide + L-glutamine = D-erythro-1-(imidazol-4-yl)glycerol 3-phosphate + 5-amino-1-(5-phospho-beta-D-ribosyl)imidazole-4-carboxamide + L-glutamate + H(+). It catalyses the reaction L-glutamine + H2O = L-glutamate + NH4(+). It functions in the pathway amino-acid biosynthesis; L-histidine biosynthesis; L-histidine from 5-phospho-alpha-D-ribose 1-diphosphate: step 5/9. Functionally, IGPS catalyzes the conversion of PRFAR and glutamine to IGP, AICAR and glutamate. The HisH subunit catalyzes the hydrolysis of glutamine to glutamate and ammonia as part of the synthesis of IGP and AICAR. The resulting ammonia molecule is channeled to the active site of HisF. The protein is Imidazole glycerol phosphate synthase subunit HisH of Ralstonia nicotianae (strain ATCC BAA-1114 / GMI1000) (Ralstonia solanacearum).